The following is a 504-amino-acid chain: Anaerobic nitric oxide reductase transcription regulator NorR (504 aa).

Residue Asp-57 is modified to 4-aspartylphosphate. The Sigma-54 factor interaction domain maps to 187 to 416 (MIGLSPGMTQ…LEHAIHRAVV (230 aa)). ATP-binding positions include 215-222 (GETGTGKE) and 278-287 (ADNGTLFLDE). The H-T-H motif DNA-binding region spans 479–498 (WAACARMLETDVANLHRLAK).

It participates in nitrogen metabolism; nitric oxide reduction. Functionally, required for the expression of anaerobic nitric oxide (NO) reductase, acts as a transcriptional activator for at least the norVW operon. Activation also requires sigma-54. The polypeptide is Anaerobic nitric oxide reductase transcription regulator NorR (Escherichia coli O45:K1 (strain S88 / ExPEC)).